A 184-amino-acid chain; its full sequence is MSWRSESIWIEFITGSRKTSNFCWAFILFLGSLGFLLVGTSSYLGRNFISVFASQQIIFFPQGIVMSFYGIAGLFISCYLWCTFLWNVGSGYDLFDRKEGIVRIFRWGFPGKSRRIFLRFLMKDIQSIRIEVKEGVSARRVLYMEIRGQGAIPLIRTDENFTTREIEQKAAELAYFLRVPIEVF.

2 consecutive transmembrane segments (helical) span residues 22–42 and 57–77; these read FCWAFILFLGSLGFLLVGTSS and IIFFPQGIVMSFYGIAGLFIS.

Belongs to the Ycf4 family.

The protein resides in the plastid. The protein localises to the chloroplast thylakoid membrane. Its function is as follows. Seems to be required for the assembly of the photosystem I complex. This Arabis hirsuta (Hairy rock-cress) protein is Photosystem I assembly protein Ycf4.